We begin with the raw amino-acid sequence, 108 residues long: MGFKEGDAKKGANLFKTRCAQCHTLGEGEGNKIGPNLHGLFGRHTGSVEGFSYTDANKAKGIEWNKDTLFEYLENPKKYIPGTKMAFGGLKKDKDRNDLITFLQDSTK.

Heme c is bound by residues cysteine 19, cysteine 22, histidine 23, and methionine 85.

It belongs to the cytochrome c family. In terms of processing, binds 1 heme c group covalently per subunit.

Its subcellular location is the mitochondrion intermembrane space. Electron carrier protein. The oxidized form of the cytochrome c heme group can accept an electron from the heme group of the cytochrome c1 subunit of cytochrome reductase. Cytochrome c then transfers this electron to the cytochrome oxidase complex, the final protein carrier in the mitochondrial electron-transport chain. In Stellaria longipes (Longstalk starwort), this protein is Cytochrome c.